We begin with the raw amino-acid sequence, 201 residues long: Cytochrome c oxidase assembly protein CtaG (201 aa).

The Cytoplasmic portion of the chain corresponds to 1 to 12 (MTDQGENEKKQR). A helical; Signal-anchor for type II membrane protein membrane pass occupies residues 13–35 (RSNATIAVACLSFFVCMIGAAYA). Topologically, residues 36-201 (SVPLYRIFCQ…KAVGSTRNGG (166 aa)) are periplasmic.

This sequence belongs to the COX11/CtaG family.

The protein resides in the cell inner membrane. Exerts its effect at some terminal stage of cytochrome c oxidase synthesis, probably by being involved in the insertion of the copper B into subunit I. In Brucella suis biovar 1 (strain 1330), this protein is Cytochrome c oxidase assembly protein CtaG.